The sequence spans 276 residues: Streptothricin hydrolase (276 aa).

Residue cysteine 176 is the Nucleophile of the active site. Residues 250-276 (PEAPAAAAAPAAGTGLSPAGPPPAPAR) are disordered. The segment covering 252–267 (APAAAAAPAAGTGLSP) has biased composition (low complexity).

Belongs to the isochorismatase family. As to quaternary structure, homodimer. The cofactor is Does not require a metal cofactor..

It catalyses the reaction streptothricin F + H2O = streptothricin F acid. Catalyzes the hydrolysis of the amide bond of streptolidine lactam, thereby conferring streptothricin (ST) resistance. Can hydrolyze streptothricin-F and streptothricin-D. However, this strain is believed to be a ST nonproducer, which raises the possibility that its true role may not be its involvement in self-resistance to STs. May catalyze the hydrolysis of naturally occurring cyclic amide compounds that are structurally related to STs. This is Streptothricin hydrolase (sttH) from Streptomyces noursei (Streptomyces albulus).